Reading from the N-terminus, the 299-residue chain is UDP-N-acetylenolpyruvoylglucosamine reductase (299 aa).

An FAD-binding PCMH-type domain is found at 26–191 (GIGGPAKYFV…VSATFQLNAS (166 aa)). Residue R170 is part of the active site. C218 acts as the Proton donor in catalysis. The active site involves E288.

This sequence belongs to the MurB family. FAD serves as cofactor.

It localises to the cytoplasm. The catalysed reaction is UDP-N-acetyl-alpha-D-muramate + NADP(+) = UDP-N-acetyl-3-O-(1-carboxyvinyl)-alpha-D-glucosamine + NADPH + H(+). The protein operates within cell wall biogenesis; peptidoglycan biosynthesis. Functionally, cell wall formation. In Protochlamydia amoebophila (strain UWE25), this protein is UDP-N-acetylenolpyruvoylglucosamine reductase.